Reading from the N-terminus, the 205-residue chain is MCAAQRSAAALAAAAPRTVYAFSARPLAGGEPFNLSSLRGKVLLIENVASLUGTTVRDYTQMNDLQRRLGPRGLVVLGFPCNQFGHQENAKNEEILNCLKYVRPGGGFEPNFMLFEKCEVNGEKAHPLFAFLREVLPTPSDDATALMTDPKFITWSPVCRNDVSWNFEKFLVGPDGVPVRRYSRRFLTIDIEPDIETLLSQGASA.

A Phosphoserine modification is found at Ser-37. Sec-52 is an active-site residue. Residue Sec-52 is a non-standard amino acid, selenocysteine. N6-acetyllysine; alternate is present on residues Lys-91 and Lys-117. N6-succinyllysine; alternate is present on residues Lys-91 and Lys-117. N-linked (Glc) (glycation) lysine; in vitro glycosylation is present at Lys-117. Lys-124 carries the N6-acetyllysine modification. Lys-151 carries the post-translational modification N6-acetyllysine; alternate. At Lys-151 the chain carries N6-succinyllysine; alternate. Phosphoserine occurs at positions 200 and 204.

The protein belongs to the glutathione peroxidase family. Homotetramer. Interacts with MIEN1. During periods of oxidative stress, Sec-52 may react with a superoxide radical, irreversibly lose hydroselenide and be converted to dehydroalanine.

It localises to the cytoplasm. Its subcellular location is the mitochondrion. It carries out the reaction 2 glutathione + H2O2 = glutathione disulfide + 2 H2O. The catalysed reaction is a hydroperoxy polyunsaturated fatty acid + 2 glutathione = a hydroxy polyunsaturated fatty acid + glutathione disulfide + H2O. It catalyses the reaction tert-butyl hydroperoxide + 2 glutathione = tert-butanol + glutathione disulfide + H2O. The enzyme catalyses cumene hydroperoxide + 2 glutathione = 2-phenylpropan-2-ol + glutathione disulfide + H2O. It carries out the reaction (13S)-hydroperoxy-(9Z,11E)-octadecadienoate + 2 glutathione = (13S)-hydroxy-(9Z,11E)-octadecadienoate + glutathione disulfide + H2O. The catalysed reaction is (9S)-hydroperoxy-(10E,12Z)-octadecadienoate + 2 glutathione = (9S)-hydroxy-(10E,12Z)-octadecadienoate + glutathione disulfide + H2O. It catalyses the reaction (5S)-hydroperoxy-(6E,8Z,11Z,14Z)-eicosatetraenoate + 2 glutathione = (5S)-hydroxy-(6E,8Z,11Z,14Z)-eicosatetraenoate + glutathione disulfide + H2O. The enzyme catalyses (12S)-hydroperoxy-(5Z,8Z,10E,14Z)-eicosatetraenoate + 2 glutathione = (12S)-hydroxy-(5Z,8Z,10E,14Z)-eicosatetraenoate + glutathione disulfide + H2O. It carries out the reaction (12R)-hydroperoxy-(5Z,8Z,10E,14Z)-eicosatetraenoate + 2 glutathione = (12R)-hydroxy-(5Z,8Z,10E,14Z)-eicosatetraenoate + glutathione disulfide + H2O. The catalysed reaction is (15S)-hydroperoxy-(5Z,8Z,11Z,13E)-eicosatetraenoate + 2 glutathione = (15S)-hydroxy-(5Z,8Z,11Z,13E)-eicosatetraenoate + glutathione disulfide + H2O. It catalyses the reaction (5S)-hydroperoxy-(6E,8Z,11Z,14Z,17Z)-eicosapentaenoate + 2 glutathione = (5S)-hydroxy-(6E,8Z,11Z,14Z,17Z)-eicosapentaenoate + glutathione disulfide + H2O. The enzyme catalyses (15S)-hydroperoxy-(5Z,8Z,11Z,13E,17Z)-eicosapentaenoate + 2 glutathione = (15S)-hydroxy-(5Z,8Z,11Z,13E,17Z)-eicosapentaenoate + glutathione disulfide + H2O. It carries out the reaction (15S)-hydroperoxy-(11Z,13E)-eicosadienoate + 2 glutathione = (15S)-hydroxy-(11Z,13E)-eicosadienoate + glutathione disulfide + H2O. The catalysed reaction is (17S)-hydroperoxy-(4Z,7Z,10Z,13Z,15E,19Z)-docosahexaenoate + 2 glutathione = (17S)-hydroxy-(4Z,7Z,10Z,13Z,15E,19Z)-docosahexaenoate + glutathione disulfide + H2O. Catalyzes the reduction of hydroperoxides in a glutathione-dependent manner thus regulating cellular redox homeostasis. Can reduce small soluble hydroperoxides such as H2O2, cumene hydroperoxide and tert-butyl hydroperoxide, as well as several fatty acid-derived hydroperoxides. In platelets catalyzes the reduction of 12-hydroperoxyeicosatetraenoic acid, the primary product of the arachidonate 12-lipoxygenase pathway. This is Glutathione peroxidase 1 (GPX1) from Bos taurus (Bovine).